Reading from the N-terminus, the 157-residue chain is DNA gyrase inhibitor (157 aa).

The protein belongs to the DNA gyrase inhibitor family. In terms of assembly, interacts with DNA gyrase.

The protein localises to the cytoplasm. Its function is as follows. Inhibits the supercoiling activity of DNA gyrase. Acts by inhibiting DNA gyrase at an early step, prior to (or at the step of) binding of DNA by the gyrase. It protects cells against toxins that target DNA gyrase, by inhibiting activity of these toxins and reducing the formation of lethal double-strand breaks in the cell. This chain is DNA gyrase inhibitor, found in Klebsiella pneumoniae (strain 342).